Here is a 181-residue protein sequence, read N- to C-terminus: Insulin-like growth factor 2 (181 aa).

An N-terminal signal peptide occupies residues 1 to 24 (MGIPMRKPLLVLLVFLALASCCYA). Positions 25–52 (AYRPSETLCGGELVDTLQFVCGDRGFYF) are b. Disulfide bonds link Cys-33–Cys-71, Cys-45–Cys-84, and Cys-70–Cys-75. The c stretch occupies residues 53 to 64 (SRPASRVNRRSR). Positions 65-85 (GIVEECCFRSCDLALLETYCA) are a. Residues 86–91 (TPAKSE) are d. Positions 92–181 (RDVSTPPTVL…ASPEASGHRK (90 aa)) are cleaved as a propeptide — e peptide. The tract at residues 151–181 (EAKRHRPLTARPTRDPAAHGGASPEASGHRK) is disordered. O-linked (GalNAc...) threonine glycosylation is present at Thr-163.

The protein belongs to the insulin family. As to quaternary structure, interacts with MYORG; this interaction is required for IGF2 secretion. Interacts with integrins ITGAV:ITGB3 and ITGA6:ITGB4; integrin-binding is required for IGF2 signaling. Interacts with IGFBP2. Post-translationally, proteolytically processed by PCSK4, proIGF2 is cleaved at Arg-128 and Arg-92 to generate big-IGF2 and mature IGF2.

It is found in the secreted. Functionally, the insulin-like growth factors possess growth-promoting activity. Major fetal growth hormone in mammals. Plays a key role in regulating fetoplacental development. IGF2 is influenced by placental lactogen. Also involved in tissue differentiation. In adults, involved in glucose metabolism in adipose tissue, skeletal muscle and liver. Acts as a ligand for integrin which is required for IGF2 signaling. Positively regulates myogenic transcription factor MYOD1 function by facilitating the recruitment of transcriptional coactivators, thereby controlling muscle terminal differentiation. Inhibits myoblast differentiation and modulates metabolism via increasing the mitochondrial respiration rate. In terms of biological role, preptin undergoes glucose-mediated co-secretion with insulin, and acts as a physiological amplifier of glucose-mediated insulin secretion. Exhibits osteogenic properties by increasing osteoblast mitogenic activity through phosphoactivation of MAPK1 and MAPK3. In Sus scrofa (Pig), this protein is Insulin-like growth factor 2.